Here is a 118-residue protein sequence, read N- to C-terminus: Large ribosomal subunit protein bL20 (118 aa).

This sequence belongs to the bacterial ribosomal protein bL20 family.

Functionally, binds directly to 23S ribosomal RNA and is necessary for the in vitro assembly process of the 50S ribosomal subunit. It is not involved in the protein synthesizing functions of that subunit. In Azotobacter vinelandii, this protein is Large ribosomal subunit protein bL20.